Consider the following 841-residue polypeptide: Translation initiation factor IF-2 (841 aa).

Residues 94-258 (QRSPEEIEAE…HGFQSPTGPV (165 aa)) form a disordered region. The span at 96-136 (SPEEIEAERKRELEERRAVENAARQKAEEEAKRRAEEEARR) shows a compositional bias: basic and acidic residues. A compositionally biased stretch (low complexity) spans 137 to 173 (QPAAAQPAGTEAVAAPVAPVEAVREAAPVAAAPAPAA). Composition is skewed to basic and acidic residues over residues 174-194 (DARK…DNNR), 200-217 (DGER…EKAP), and 225-234 (TTDEESDGFR). Basic residues predominate over residues 235–248 (RGGRGKAKLKKRNA). The 170-residue stretch at 341 to 510 (SRAPVVTVMG…LLQAEVLELK (170 aa)) folds into the tr-type G domain. The interval 350-357 (GHVDHGKT) is G1. 350-357 (GHVDHGKT) is a binding site for GTP. Residues 375 to 379 (GITQH) are G2. A G3 region spans residues 396 to 399 (DTPG). Residues 396–400 (DTPGH) and 450–453 (NKID) contribute to the GTP site. The tract at residues 450–453 (NKID) is G4. The interval 486 to 488 (SAK) is G5.

Belongs to the TRAFAC class translation factor GTPase superfamily. Classic translation factor GTPase family. IF-2 subfamily.

Its subcellular location is the cytoplasm. In terms of biological role, one of the essential components for the initiation of protein synthesis. Protects formylmethionyl-tRNA from spontaneous hydrolysis and promotes its binding to the 30S ribosomal subunits. Also involved in the hydrolysis of GTP during the formation of the 70S ribosomal complex. This Pseudomonas fluorescens (strain SBW25) protein is Translation initiation factor IF-2.